The sequence spans 539 residues: MSAEGSQSLAAPRGRPSHLLVPARTKTALALLYDEGLENAYDVRLKLTKEVLTIQKQDVVCIGGAPPGANHRTVTLRRQPVGGLGLSIKGGAEHGVPVVISKIFKDQAADQTEMLFIGDAVLQVNGINVENATHEEVVHLLRNAGDDVTITVEYLREAPSFLKLPLGSPGPSSDHSSRASSPLFDSGLHLNGHCSHTAPSSPSSPIANEPKYEKRWLDTLSVPLSMARISRYKAGTEKLRSSALEVLALDGASTGVLQFSTAQDCADWLRSISTNISDLTLQHMKMANKCCSPCDQVVHMGWVNERLQGADNSQNFRPKFLALRGSSFYIFGAPPVSTLDWGRAERAYNLCEVLFKVHKFWLSDNYWLQANLYLGLQDFDCEDPRSYCFSVLANHGKSHIFSVELGSELAVWEKAFQRATFMEVQRTGSKTYLCSWQGETLCFTVDFALGFTCFDGKTKNVLWRFKFSQLKGSSDDGKTRVKLLFQNLDTKQIETKELEFQDLTAVLHCIHSFIAAKVASLDPVFMDSQSMARRYLCSS.

The PDZ domain occupies 73–156; the sequence is TVTLRRQPVG…DVTITVEYLR (84 aa). Positions 296–421 constitute a PH domain; it reads QVVHMGWVNE…WEKAFQRATF (126 aa).

The protein belongs to the syntrophin family. Interacts with the dystrophin protein DMD and related proteins DTNA and DTNB.

Its subcellular location is the cell membrane. It localises to the sarcolemma. It is found in the cytoplasm. The protein localises to the cytoskeleton. In terms of biological role, adapter protein that binds to and probably organizes the subcellular localization of a variety of proteins. May link various receptors to the actin cytoskeleton and the dystrophin glycoprotein complex. In Mus musculus (Mouse), this protein is Gamma-2-syntrophin (Sntg2).